The chain runs to 948 residues: Protocadherin alpha-10 (948 aa).

The N-terminal stretch at M1–G28 is a signal peptide. 6 Cadherin domains span residues Q29–F132, S133–F241, D242–V349, I350–F454, A455–L564, and G587–V689. Residues Q29 to N695 lie on the Extracellular side of the membrane. 2 N-linked (GlcNAc...) asparagine glycosylation sites follow: N256 and N264. N547 is a glycosylation site (N-linked (GlcNAc...) asparagine). Residues V696–Y716 traverse the membrane as a helical segment. At T717–Q948 the chain is on the cytoplasmic side. PXXP repeat units lie at residues P732–P735, P772–P775, P797–P800, P830–P833, P871–P874, and P889–P892. The interval P732 to P892 is 6 X 4 AA repeats of P-X-X-P. Disordered stretches follow at residues D783–W804 and R827–Q948. Over residues D907–K921 the composition is skewed to basic and acidic residues.

Its subcellular location is the cell membrane. In terms of biological role, potential calcium-dependent cell-adhesion protein. May be involved in the establishment and maintenance of specific neuronal connections in the brain. The protein is Protocadherin alpha-10 (PCDHA10) of Pan troglodytes (Chimpanzee).